The following is a 316-amino-acid chain: M-phase inducer phosphatase cdc-25.3 (316 aa).

A disordered region spans residues 35–65 (QNRQHSSAISHISNSSPPTRKRSIDGGYTSG). The segment covering 39 to 50 (HSSAISHISNSS) has biased composition (low complexity). A Rhodanese domain is found at 136–242 (FMQKYILIDC…FYAFTRGLEK (107 aa)).

The protein belongs to the MPI phosphatase family.

It catalyses the reaction O-phospho-L-tyrosyl-[protein] + H2O = L-tyrosyl-[protein] + phosphate. This chain is M-phase inducer phosphatase cdc-25.3 (cdc-25.3), found in Caenorhabditis elegans.